The following is a 117-amino-acid chain: V-type sodium ATPase subunit F (117 aa).

The segment at 1–20 is disordered; that stretch reads MARILTRIKEAEENNQKKEE. Positions 7-20 are enriched in basic and acidic residues; it reads RIKEAEENNQKKEE.

The protein belongs to the V-ATPase G subunit family.

Involved in ATP-driven sodium extrusion. This Enterococcus hirae (strain ATCC 9790 / DSM 20160 / JCM 8729 / LMG 6399 / NBRC 3181 / NCIMB 6459 / NCDO 1258 / NCTC 12367 / WDCM 00089 / R) protein is V-type sodium ATPase subunit F (ntpF).